We begin with the raw amino-acid sequence, 150 residues long: Large ribosomal subunit protein uL11 (150 aa).

This sequence belongs to the universal ribosomal protein uL11 family. Part of the ribosomal stalk of the 50S ribosomal subunit. Interacts with L10 and the large rRNA to form the base of the stalk. L10 forms an elongated spine to which L12 dimers bind in a sequential fashion forming a multimeric L10(L12)X complex. In terms of processing, one or more lysine residues are methylated.

Functionally, forms part of the ribosomal stalk which helps the ribosome interact with GTP-bound translation factors. The chain is Large ribosomal subunit protein uL11 from Ureaplasma urealyticum serovar 10 (strain ATCC 33699 / Western).